Reading from the N-terminus, the 442-residue chain is GTPase Der (442 aa).

EngA-type G domains are found at residues 2–167 and 175–351; these read RTIA…PIQN and FKFC…EQAM. GTP-binding positions include 8-15, 55-59, 119-122, 181-188, 228-232, and 293-296; these read GKPNVGKS, DTGGI, NKIE, GRPNVGKS, DTAGI, and NKWD. The region spanning 352–436 is the KH-like domain; sequence RKIATSLLND…PITLYWQDKN (85 aa).

This sequence belongs to the TRAFAC class TrmE-Era-EngA-EngB-Septin-like GTPase superfamily. EngA (Der) GTPase family. In terms of assembly, associates with the 50S ribosomal subunit.

Functionally, GTPase that plays an essential role in the late steps of ribosome biogenesis. The polypeptide is GTPase Der (Ureaplasma parvum serovar 3 (strain ATCC 27815 / 27 / NCTC 11736)).